Reading from the N-terminus, the 125-residue chain is Large ribosomal subunit protein bL12 (125 aa).

Belongs to the bacterial ribosomal protein bL12 family. As to quaternary structure, homodimer. Part of the ribosomal stalk of the 50S ribosomal subunit. Forms a multimeric L10(L12)X complex, where L10 forms an elongated spine to which 2 to 4 L12 dimers bind in a sequential fashion. Binds GTP-bound translation factors.

Functionally, forms part of the ribosomal stalk which helps the ribosome interact with GTP-bound translation factors. Is thus essential for accurate translation. The polypeptide is Large ribosomal subunit protein bL12 (Paraburkholderia phymatum (strain DSM 17167 / CIP 108236 / LMG 21445 / STM815) (Burkholderia phymatum)).